The following is a 194-amino-acid chain: Holliday junction branch migration complex subunit RuvA (194 aa).

The domain I stretch occupies residues 1–64 (MIGRLRGVLT…DDSAALYGFL (64 aa)). Residues 65–140 (SESERRLFRH…RAADFNNGIS (76 aa)) are domain II. The segment at 140–144 (STSGK) is flexible linker. The tract at residues 145-194 (LNLDTVSEAALALQQLGYKPAEAARMARDAGTESDDVAIVIKKALQTVLR) is domain III.

This sequence belongs to the RuvA family. In terms of assembly, homotetramer. Forms an RuvA(8)-RuvB(12)-Holliday junction (HJ) complex. HJ DNA is sandwiched between 2 RuvA tetramers; dsDNA enters through RuvA and exits via RuvB. An RuvB hexamer assembles on each DNA strand where it exits the tetramer. Each RuvB hexamer is contacted by two RuvA subunits (via domain III) on 2 adjacent RuvB subunits; this complex drives branch migration. In the full resolvosome a probable DNA-RuvA(4)-RuvB(12)-RuvC(2) complex forms which resolves the HJ.

It localises to the cytoplasm. The RuvA-RuvB-RuvC complex processes Holliday junction (HJ) DNA during genetic recombination and DNA repair, while the RuvA-RuvB complex plays an important role in the rescue of blocked DNA replication forks via replication fork reversal (RFR). RuvA specifically binds to HJ cruciform DNA, conferring on it an open structure. The RuvB hexamer acts as an ATP-dependent pump, pulling dsDNA into and through the RuvAB complex. HJ branch migration allows RuvC to scan DNA until it finds its consensus sequence, where it cleaves and resolves the cruciform DNA. This is Holliday junction branch migration complex subunit RuvA from Xylella fastidiosa (strain M23).